Here is a 319-residue protein sequence, read N- to C-terminus: Sulfate adenylyltransferase subunit 2 (319 aa).

The protein belongs to the PAPS reductase family. CysD subfamily. Heterodimer composed of CysD, the smaller subunit, and CysN.

It catalyses the reaction sulfate + ATP + H(+) = adenosine 5'-phosphosulfate + diphosphate. The protein operates within sulfur metabolism; hydrogen sulfide biosynthesis; sulfite from sulfate: step 1/3. In terms of biological role, with CysN forms the ATP sulfurylase (ATPS) that catalyzes the adenylation of sulfate producing adenosine 5'-phosphosulfate (APS) and diphosphate, the first enzymatic step in sulfur assimilation pathway. APS synthesis involves the formation of a high-energy phosphoric-sulfuric acid anhydride bond driven by GTP hydrolysis by CysN coupled to ATP hydrolysis by CysD. The sequence is that of Sulfate adenylyltransferase subunit 2 from Methylobacterium radiotolerans (strain ATCC 27329 / DSM 1819 / JCM 2831 / NBRC 15690 / NCIMB 10815 / 0-1).